We begin with the raw amino-acid sequence, 94 residues long: uncharacterized protein (94 aa).

Expressed in heart.

This is an uncharacterized protein from Homo sapiens (Human).